Consider the following 583-residue polypeptide: Aspartate--tRNA ligase (583 aa).

Position 174 (Glu174) interacts with L-aspartate. The tract at residues 198-201 (QTFK) is aspartate. Arg220 serves as a coordination point for L-aspartate. Residues 220–222 (RDE) and Gln229 contribute to the ATP site. L-aspartate is bound at residue His445. Glu479 contacts ATP. Arg486 contributes to the L-aspartate binding site. Residue 531–534 (GLDR) participates in ATP binding.

Belongs to the class-II aminoacyl-tRNA synthetase family. Type 1 subfamily. In terms of assembly, homodimer.

The protein resides in the cytoplasm. It carries out the reaction tRNA(Asp) + L-aspartate + ATP = L-aspartyl-tRNA(Asp) + AMP + diphosphate. Its function is as follows. Catalyzes the attachment of L-aspartate to tRNA(Asp) in a two-step reaction: L-aspartate is first activated by ATP to form Asp-AMP and then transferred to the acceptor end of tRNA(Asp). The polypeptide is Aspartate--tRNA ligase (Flavobacterium psychrophilum (strain ATCC 49511 / DSM 21280 / CIP 103535 / JIP02/86)).